A 622-amino-acid polypeptide reads, in one-letter code: Dopamine beta-hydroxylase (622 aa).

Residues 1-20 (MQAHLSHQPCWSSLPSPSVR) lie on the Cytoplasmic side of the membrane. A helical; Signal-anchor for type II membrane protein transmembrane segment spans residues 21–41 (EAASMYGTAVAIFLVILVAAL). Residues 42-621 (RGSEPPESPF…TVPITTEADA (580 aa)) are Intragranular-facing. Residues 61 to 177 (GILELSWNVS…DTVHLVYGIL (117 aa)) enclose the DOMON domain. N-linked (GlcNAc...) asparagine glycosylation is found at Asn68 and Asn188. 6 cysteine pairs are disulfide-bonded: Cys158–Cys600, Cys236–Cys287, Cys273–Cys299, Cys394–Cys507, Cys398–Cys569, and Cys470–Cys492. Tyr234 is an active-site residue. Cu(2+)-binding residues include His266 and His267. Position 337 (His337) interacts with Cu(2+). Ser350 bears the Phosphoserine; by CaMK mark. His416 is a catalytic residue. Positions 416 and 418 each coordinate Cu(2+). Asn476 carries an N-linked (GlcNAc...) asparagine glycan. Met491 contacts Cu(2+). An N-linked (GlcNAc...) asparagine glycan is attached at Asn570. The segment at 594-622 (EEPTPRCPIRQTQSPANPTVPITTEADAE) is disordered. Polar residues predominate over residues 603 to 615 (RQTQSPANPTVPI).

The protein belongs to the copper type II ascorbate-dependent monooxygenase family. In terms of assembly, homotetramer; composed of two disulfide-linked dimers. Cu(2+) serves as cofactor. In terms of processing, proteolytic cleavage after the membrane-anchor leads to the release of the soluble form. Post-translationally, N-glycosylated. As to expression, detected in adrenal gland secretory granules (at protein level). Detected in adrenal gland.

The protein resides in the cytoplasmic vesicle. The protein localises to the secretory vesicle lumen. Its subcellular location is the secretory vesicle. It localises to the chromaffin granule lumen. It is found in the secretory vesicle membrane. The protein resides in the chromaffin granule membrane. The enzyme catalyses dopamine + 2 L-ascorbate + O2 = (R)-noradrenaline + 2 monodehydro-L-ascorbate radical + H2O. It participates in catecholamine biosynthesis; (R)-noradrenaline biosynthesis; (R)-noradrenaline from dopamine: step 1/1. In terms of biological role, catalyzes the hydroxylation of dopamine to noradrenaline (also known as norepinephrine), and is thus vital for regulation of these neurotransmitters. The chain is Dopamine beta-hydroxylase (Dbh) from Mus musculus (Mouse).